A 101-amino-acid chain; its full sequence is Osteocalcin (101 aa).

A signal peptide spans 1 to 19; the sequence is MKLAILTVLLLGAAVLCLG. Residues 20–52 constitute a propeptide that is removed on maturation; the sequence is SKDADHSNSVGESHSSEAFISRQESASFARLKR. Residues 53 to 99 form the Gla domain; the sequence is SYGNNVGQGAAVGSPLESQREVCELNPDCDELADHIGFQEAYRRFYG. 4 residues coordinate Ca(2+): glutamate 69, glutamate 73, glutamate 76, and aspartate 82. Residues glutamate 69, glutamate 73, and glutamate 76 each carry the 4-carboxyglutamate modification. A disulfide bond links cysteine 75 and cysteine 81.

This sequence belongs to the osteocalcin/matrix Gla protein family. Post-translationally, gamma-carboxyglutamate residues are formed by vitamin K dependent carboxylation by GGCX. These residues are essential for the binding of calcium.

Its subcellular location is the secreted. Its function is as follows. The carboxylated form is one of the main organic components of the bone matrix, which constitutes 1-2% of the total bone protein. The carboxylated form binds strongly to apatite and calcium. The sequence is that of Osteocalcin (bglap) from Xenopus laevis (African clawed frog).